The chain runs to 359 residues: tRNA/tmRNA (uracil-C(5))-methyltransferase (359 aa).

Q183, Y211, N216, E232, and D292 together coordinate S-adenosyl-L-methionine. Catalysis depends on C317, which acts as the Nucleophile. E351 acts as the Proton acceptor in catalysis.

Belongs to the class I-like SAM-binding methyltransferase superfamily. RNA M5U methyltransferase family. TrmA subfamily.

The catalysed reaction is uridine(54) in tRNA + S-adenosyl-L-methionine = 5-methyluridine(54) in tRNA + S-adenosyl-L-homocysteine + H(+). The enzyme catalyses uridine(341) in tmRNA + S-adenosyl-L-methionine = 5-methyluridine(341) in tmRNA + S-adenosyl-L-homocysteine + H(+). In terms of biological role, dual-specificity methyltransferase that catalyzes the formation of 5-methyluridine at position 54 (m5U54) in all tRNAs, and that of position 341 (m5U341) in tmRNA (transfer-mRNA). The polypeptide is tRNA/tmRNA (uracil-C(5))-methyltransferase (Pseudomonas fluorescens (strain Pf0-1)).